The primary structure comprises 652 residues: Probable protein phosphatase 2C 19 (652 aa).

Positions 265–517 (KYVVSSMQGW…DNTTVILVLF (253 aa)) constitute a PPM-type phosphatase domain. Mn(2+)-binding residues include aspartate 300, glycine 301, glutamate 467, and aspartate 508. The disordered stretch occupies residues 524–567 (AVPPVDTDTDTDSHTGDDVDNNDPANEVDPTANAGSDDSNTSDE).

This sequence belongs to the PP2C family. Mg(2+) serves as cofactor. It depends on Mn(2+) as a cofactor.

It catalyses the reaction O-phospho-L-seryl-[protein] + H2O = L-seryl-[protein] + phosphate. The enzyme catalyses O-phospho-L-threonyl-[protein] + H2O = L-threonyl-[protein] + phosphate. In Oryza sativa subsp. japonica (Rice), this protein is Probable protein phosphatase 2C 19.